A 292-amino-acid chain; its full sequence is Hydroxysqualene synthase (292 aa).

The protein belongs to the phytoene/squalene synthase family. HpnC subfamily.

The catalysed reaction is presqualene diphosphate + H2O = hydroxysqualene + diphosphate. Its pathway is secondary metabolite biosynthesis; hopanoid biosynthesis. Involved in the biosynthesis of the hopanoid precursor squalene (SQ) from farnesyl diphosphate (FPP). Catalyzes the second step, the conversion of presqualene diphosphate (PSPP) to hydroxysqualene (HSQ). This Sinorhizobium fredii (strain NBRC 101917 / NGR234) protein is Hydroxysqualene synthase.